The primary structure comprises 551 residues: Bestrophin-1 (551 aa).

Over 1-31 (MTITYTNKVANARLGSFSSLLLCWRGSIYKL) the chain is Cytoplasmic. A Ca(2+)-binding site is contributed by A10. Residues 32-51 (LYGEFLVFIFLYYSIRGLYR) traverse the membrane as a helical segment. Topologically, residues 52–60 (MVLSSDQQL) are extracellular. The chain crosses the membrane as a helical span at residues 61 to 82 (LFEKLALYCDSYIQLIPISFVL). Residues 83–237 (GFYVTLVVSR…DWISIPLVYT (155 aa)) are Cytoplasmic-facing. A helical membrane pass occupies residues 238–255 (QVVTVAVYSFFLACLIGR). Topologically, residues 256 to 274 (QFLNPNKDYPGHEMDLVVP) are extracellular. A helical transmembrane segment spans residues 275-288 (VFTILQFLFYMGWL). The Cytoplasmic portion of the chain corresponds to 289–551 (KVAEQLINPF…EAGTKPVLYE (263 aa)). Residues Q293, N296, D301, and D304 each contribute to the Ca(2+) site. The auto-inhibitory segment stretch occupies residues 346 to 379 (PYTAASARSRRHSFMGSTFNISLKKEDLELWSKE). The interval 459 to 489 (SHCGPQAPSSHPTEQSAPSSSDTGDGPSTDY) is disordered. Residues 465 to 475 (APSSHPTEQSA) show a composition bias toward polar residues. Over residues 476–488 (PSSSDTGDGPSTD) the composition is skewed to low complexity.

Belongs to the anion channel-forming bestrophin (TC 1.A.46) family. Calcium-sensitive chloride channel subfamily. Interacts with YWHAG; this interaction promotes the ligand-gated L-glutamate channel activity leading to the positive regulation of NMDA glutamate receptor activity through the L-glutamate secretion.

Its subcellular location is the cell membrane. It localises to the basolateral cell membrane. It catalyses the reaction 4-aminobutanoate(in) = 4-aminobutanoate(out). It carries out the reaction L-glutamate(out) = L-glutamate(in). The enzyme catalyses chloride(in) = chloride(out). The catalysed reaction is hydrogencarbonate(in) = hydrogencarbonate(out). It catalyses the reaction D-serine(in) = D-serine(out). With respect to regulation, inactivated by sulfhydryl-reactive agents. Ligand-gated anion channel that allows the movement of anions across cell membranes when activated by calcium (Ca2+). Allows the movement of chloride and hydrogencarbonate. Found in a partially open conformation leading to significantly smaller chloride movement. Upon F2R/PAR-1 activation, the sequestered calcium is released into the cytosol of astrocytes, leading to the (Ca2+)-dependent release of L-glutamate into the synaptic cleft that targets the neuronal postsynaptic GRIN2A/NMDAR receptor resulting in the synaptic plasticity regulation. Upon activation of the norepinephrine-alpha-1 adrenergic receptor signaling pathway, transports as well D-serine than L-glutamate in a (Ca2+)-dependent manner, leading to activation of adjacent NMDAR receptors and therefore regulates the heterosynaptic long-term depression and metaplasticity during initial memory acquisition. Releases the 4-aminobutanoate neurotransmitter in a (Ca2+)-dependent manner, and participates in its tonic release from cerebellar glial cells. This is Bestrophin-1 from Mus musculus (Mouse).